Reading from the N-terminus, the 199-residue chain is Prolactin (199 aa).

The cysteines at positions 4 and 11 are disulfide-linked. Residues serine 26, serine 34, and serine 90 each carry the phosphoserine modification. Intrachain disulfides connect cysteine 58-cysteine 174 and cysteine 191-cysteine 199.

It belongs to the somatotropin/prolactin family. As to quaternary structure, interacts with PRLR.

It is found in the secreted. Its function is as follows. Prolactin acts primarily on the mammary gland by promoting lactation. The chain is Prolactin (PRL) from Loxodonta africana (African elephant).